The primary structure comprises 590 residues: Protein I'm not dead yet (590 aa).

11 helical membrane passes run 43–63, 82–102, 115–135, 153–173, 224–244, 270–290, 329–349, 373–393, 457–477, 509–529, and 540–560; these read GLVV…NEGA, ALPL…MGIM, TLVM…CNLH, LHFG…NAAC, LCYY…TIIG, TFMF…FVFL, LGPM…MVVM, SMPT…YAFL, VLPN…LTAF, AGLA…NALV, and MAIA…VFCQ.

The protein belongs to the SLC13A/DASS transporter (TC 2.A.47) family. NADC subfamily. In adults, abundantly expressed in the fat body, basolateral region of midgut cells and oenocytes. Low level expression is seen in the halteres, procardia, restricted regions of the esophagus and hindgut, base of the legs and in a subset of cells in the third segment of the antennae.

It localises to the basolateral cell membrane. In terms of biological role, cation-independent electroneutral transporter (not associated with membrane depolarization) of a variety of tricarboxylic and dicarboxylic acid-cycle intermediates. There is also small, but detectable, transport of monocarboxylics. Transport is through the epithelium of the gut and across the plasma membranes of organs involved in intermediary metabolism and storage. Affinity for substrates is citrate &gt; succinate &gt; pyruvate. Fumarate, a-ketoglutarate, and glutarate are also transported, but not lactate. Transport mechanism that is not coupled to Na(+), K(+), or Cl(-). Function is shown in Xenopus oocytes and human retinal pigment epithelial (HRPE) cell lines. The polypeptide is Protein I'm not dead yet (Indy) (Drosophila melanogaster (Fruit fly)).